The chain runs to 376 residues: Probable low-specificity L-threonine aldolase (376 aa).

Polar residues predominate over residues methionine 1–serine 21. The interval methionine 1 to alanine 22 is disordered. Position 226 is an N6-(pyridoxal phosphate)lysine (lysine 226).

The protein belongs to the threonine aldolase family. In terms of assembly, homotetramer. It depends on pyridoxal 5'-phosphate as a cofactor.

The catalysed reaction is L-threonine = acetaldehyde + glycine. The enzyme catalyses L-allo-threonine = acetaldehyde + glycine. It functions in the pathway amino-acid degradation; L-threonine degradation via aldolase pathway; acetaldehyde and glycine from L-threonine: step 1/1. In Schizosaccharomyces pombe (strain 972 / ATCC 24843) (Fission yeast), this protein is Probable low-specificity L-threonine aldolase (gly1).